A 267-amino-acid polypeptide reads, in one-letter code: MTKYNWDERHIITFPEKKLALETKDLHVYYGQKEAINGIDMQFEKNKITALIGPSGCGKSTFLRSLNRMNDTIDVAKVTGQILYEGVDVNASNINVYEMRKHIGMVFQRPNPFAKSIYKNITFAHECNGVKDKQTLDEIVETSLKQAGLWEQVKDDLHKSAFTLSGGQQQRLCIARAIAVKPQILLMDEPAASLDPVATMQLEETMFELKEDYSIIIVTHNMQQAARASDYTAFFYLGDLIEYDETKKIFQDAALQSTSDYVSGRFG.

The region spanning 21 to 262 (LETKDLHVYY…AALQSTSDYV (242 aa)) is the ABC transporter domain. 53–60 (GPSGCGKS) is an ATP binding site.

This sequence belongs to the ABC transporter superfamily. Phosphate importer (TC 3.A.1.7) family. As to quaternary structure, the complex is composed of two ATP-binding proteins (PstB), two transmembrane proteins (PstC and PstA) and a solute-binding protein (PstS).

Its subcellular location is the cell membrane. It carries out the reaction phosphate(out) + ATP + H2O = ADP + 2 phosphate(in) + H(+). In terms of biological role, part of the ABC transporter complex PstSACB involved in phosphate import. Responsible for energy coupling to the transport system. The chain is Phosphate import ATP-binding protein PstB 1 from Streptococcus thermophilus (strain CNRZ 1066).